Reading from the N-terminus, the 206-residue chain is Small ribosomal subunit protein uS4 (206 aa).

One can recognise an S4 RNA-binding domain in the interval 96–156 (CRLDNVVYRM…EKSLNQLRIV (61 aa)).

The protein belongs to the universal ribosomal protein uS4 family. In terms of assembly, part of the 30S ribosomal subunit. Contacts protein S5. The interaction surface between S4 and S5 is involved in control of translational fidelity.

Its function is as follows. One of the primary rRNA binding proteins, it binds directly to 16S rRNA where it nucleates assembly of the body of the 30S subunit. With S5 and S12 plays an important role in translational accuracy. This Pseudomonas entomophila (strain L48) protein is Small ribosomal subunit protein uS4.